The sequence spans 140 residues: MRHARGYRRLNRTHEHRKALWANMAGSLIEHEQIKTTLPKAKELRPIIEKMITLAKRGDLHARRQAASKLKEDQYVAKLFDVLGPRYKDRQGGYVRVLKAGFRYGDMAPMAIIEFVDRDRDAKGAADRARLAAEENAEEA.

It belongs to the bacterial ribosomal protein bL17 family. In terms of assembly, part of the 50S ribosomal subunit. Contacts protein L32.

The sequence is that of Large ribosomal subunit protein bL17 from Roseobacter denitrificans (strain ATCC 33942 / OCh 114) (Erythrobacter sp. (strain OCh 114)).